The following is a 379-amino-acid chain: Carboxypeptidase Y-deficient protein 8 (379 aa).

Positions 84–107 (HGSGNSSSKKVTSSTSSSSSNGSV) are enriched in low complexity. The tract at residues 84 to 108 (HGSGNSSSKKVTSSTSSSSSNGSVD) is disordered. Residue serine 216 is modified to Phosphoserine.

It belongs to the VPS26 family. In terms of assembly, component of the retromer complex which consists of VPS29, VPS26, VPS35, VPS5 and VPS17. Component of a retromer subcomplex consisting of VPS29, VPS26 and VPS35.

Its function is as follows. Plays a role in vesicular protein sorting. Required for the endosome-to-Golgi retrieval of the vacuolar protein sorting receptor VPS10. Component of the membrane-associated retromer complex which is essential in endosome-to-Golgi retrograde transport. The VPS29-VPS26-VPS35 subcomplex may be involved in cargo selection. The sequence is that of Carboxypeptidase Y-deficient protein 8 (PEP8) from Saccharomyces cerevisiae (strain ATCC 204508 / S288c) (Baker's yeast).